A 122-amino-acid chain; its full sequence is Large ribosomal subunit protein uL14 (122 aa).

Belongs to the universal ribosomal protein uL14 family. In terms of assembly, part of the 50S ribosomal subunit. Forms a cluster with proteins L3 and L19. In the 70S ribosome, L14 and L19 interact and together make contacts with the 16S rRNA in bridges B5 and B8.

In terms of biological role, binds to 23S rRNA. Forms part of two intersubunit bridges in the 70S ribosome. This Bifidobacterium animalis subsp. lactis (strain AD011) protein is Large ribosomal subunit protein uL14.